The following is a 132-amino-acid chain: Large ribosomal subunit protein bL12 (132 aa).

Basic and acidic residues predominate over residues 102 to 126 (APKPIKEATNKDDAESIKKQLEEAG). Residues 102–132 (APKPIKEATNKDDAESIKKQLEEAGAKASVK) form a disordered region.

The protein belongs to the bacterial ribosomal protein bL12 family. Homodimer. Part of the ribosomal stalk of the 50S ribosomal subunit. Forms a multimeric L10(L12)X complex, where L10 forms an elongated spine to which 2 to 4 L12 dimers bind in a sequential fashion. Binds GTP-bound translation factors.

Forms part of the ribosomal stalk which helps the ribosome interact with GTP-bound translation factors. Is thus essential for accurate translation. The polypeptide is Large ribosomal subunit protein bL12 (Rippkaea orientalis (strain PCC 8801 / RF-1) (Cyanothece sp. (strain PCC 8801))).